A 206-amino-acid chain; its full sequence is dCTP deaminase, dUMP-forming (206 aa).

DCTP contacts are provided by residues arginine 117–arginine 122, aspartate 135, threonine 143–glutamate 145, glutamine 163, tyrosine 177, lysine 184, and glutamine 188. The Proton donor/acceptor role is filled by glutamate 145.

This sequence belongs to the dCTP deaminase family. Homotrimer.

It carries out the reaction dCTP + 2 H2O = dUMP + NH4(+) + diphosphate. It functions in the pathway pyrimidine metabolism; dUMP biosynthesis; dUMP from dCTP: step 1/1. Its function is as follows. Bifunctional enzyme that catalyzes both the deamination of dCTP to dUTP and the hydrolysis of dUTP to dUMP without releasing the toxic dUTP intermediate. This chain is dCTP deaminase, dUMP-forming, found in Methanococcus vannielii (strain ATCC 35089 / DSM 1224 / JCM 13029 / OCM 148 / SB).